The chain runs to 448 residues: Exodeoxyribonuclease 7 large subunit (448 aa).

This sequence belongs to the XseA family. In terms of assembly, heterooligomer composed of large and small subunits.

The protein localises to the cytoplasm. It catalyses the reaction Exonucleolytic cleavage in either 5'- to 3'- or 3'- to 5'-direction to yield nucleoside 5'-phosphates.. In terms of biological role, bidirectionally degrades single-stranded DNA into large acid-insoluble oligonucleotides, which are then degraded further into small acid-soluble oligonucleotides. This Bacillus pumilus (strain SAFR-032) protein is Exodeoxyribonuclease 7 large subunit.